A 430-amino-acid chain; its full sequence is Dihydroorotase (430 aa).

The Zn(2+) site is built by His61 and His63. Substrate-binding positions include His63–Arg65 and Asn95. Residues Asp153, His180, and His233 each contribute to the Zn(2+) site. Asn279 contacts substrate. Asp306 lines the Zn(2+) pocket. Asp306 is an active-site residue. Substrate is bound at residue His310.

Belongs to the metallo-dependent hydrolases superfamily. DHOase family. Class I DHOase subfamily. The cofactor is Zn(2+).

It carries out the reaction (S)-dihydroorotate + H2O = N-carbamoyl-L-aspartate + H(+). Its pathway is pyrimidine metabolism; UMP biosynthesis via de novo pathway; (S)-dihydroorotate from bicarbonate: step 3/3. Its function is as follows. Catalyzes the reversible cyclization of carbamoyl aspartate to dihydroorotate. The polypeptide is Dihydroorotase (Caldicellulosiruptor saccharolyticus (strain ATCC 43494 / DSM 8903 / Tp8T 6331)).